The following is a 48-amino-acid chain: uncharacterized protein (48 aa).

Positions 1-48 (MTKIPINIPATSGKIKFGITPSSNKSPSLSPSPSNGQLGGGRGYILEP) are disordered. The segment covering 21 to 36 (PSSNKSPSLSPSPSNG) has biased composition (low complexity). Residues 37 to 48 (QLGGGRGYILEP) show a composition bias toward gly residues.

This is an uncharacterized protein from Dictyostelium discoideum (Social amoeba).